The following is a 1308-amino-acid chain: D-lysergyl-peptide-synthetase subunit 2 (1308 aa).

The interval 261–658 (EWCRRTPSAV…CRKSTQVKLR (398 aa)) is adenylation (A) domain. The Carrier domain maps to 803–871 (IEEAFQRFFA…ELSELARHTK (69 aa)). An O-(pantetheine 4'-phosphoryl)serine modification is found at Ser-835. The segment at 910–1299 (EDVYPCTPLQ…HAAPRTLIGD (390 aa)) is condensation (C) domain.

It belongs to the NRP synthetase family.

It participates in alkaloid biosynthesis; ergot alkaloid biosynthesis. In terms of biological role, D-lysergyl-peptide-synthetase subunit 2; part of the gene cluster that mediates the biosynthesis of fungal ergot alkaloid. DmaW catalyzes the first step of ergot alkaloid biosynthesis by condensing dimethylallyl diphosphate (DMAP) and tryptophan to form 4-dimethylallyl-L-tryptophan. The second step is catalyzed by the methyltransferase easF that methylates 4-dimethylallyl-L-tryptophan in the presence of S-adenosyl-L-methionine, resulting in the formation of 4-dimethylallyl-L-abrine. The catalase easC and the FAD-dependent oxidoreductase easE then transform 4-dimethylallyl-L-abrine to chanoclavine-I which is further oxidized by EasD in the presence of NAD(+), resulting in the formation of chanoclavine-I aldehyde. Agroclavine dehydrogenase easG then mediates the conversion of chanoclavine-I aldehyde to agroclavine via a non-enzymatic adduct reaction: the substrate is an iminium intermediate that is formed spontaneously from chanoclavine-I aldehyde in the presence of glutathione. The presence of easA is not required to complete this reaction. Further conversion of agroclavine to paspalic acid is a two-step process involving oxidation of agroclavine to elymoclavine and of elymoclavine to paspalic acid, the second step being performed by the elymoclavine oxidase cloA. Paspalic acid is then further converted to D-lysergic acid. Ergopeptines are assembled from D-lysergic acid and three different amino acids by the D-lysergyl-peptide-synthetases composed each of a monomudular and a trimodular nonribosomal peptide synthetase subunit. LpsB and lpsC encode the monomodular subunits responsible for D-lysergic acid activation and incorporation into the ergopeptine backbone. LpsA1 and A2 subunits encode the trimodular nonribosomal peptide synthetase assembling the tripeptide portion of ergopeptines. LpsA1 is responsible for formation of the major ergopeptine, ergotamine, and lpsA2 for alpha-ergocryptine, the minor ergopeptine of the total alkaloid mixture elaborated by C.purpurea. D-lysergyl-tripeptides are assembled by the nonribosomal peptide synthetases and released as N-(D-lysergyl-aminoacyl)-lactams. Cyclolization of the D-lysergyl-tripeptides is performed by the Fe(2+)/2-ketoglutarate-dependent dioxygenase easH which introduces a hydroxyl group into N-(D-lysergyl-aminoacyl)-lactam at alpha-C of the aminoacyl residue followed by spontaneous condensation with the terminal lactam carbonyl group. The protein is D-lysergyl-peptide-synthetase subunit 2 of Claviceps purpurea (Ergot fungus).